We begin with the raw amino-acid sequence, 122 residues long: Large ribosomal subunit protein uL18 (122 aa).

Belongs to the universal ribosomal protein uL18 family. In terms of assembly, part of the 50S ribosomal subunit; part of the 5S rRNA/L5/L18/L25 subcomplex. Contacts the 5S and 23S rRNAs.

This is one of the proteins that bind and probably mediate the attachment of the 5S RNA into the large ribosomal subunit, where it forms part of the central protuberance. This is Large ribosomal subunit protein uL18 from Ruminiclostridium cellulolyticum (strain ATCC 35319 / DSM 5812 / JCM 6584 / H10) (Clostridium cellulolyticum).